Reading from the N-terminus, the 701-residue chain is MGRPSLALRLLLALLLLPPPAPLLWALRPAPCPEPCSCPPDGALRCPGPQAGLSRLSLTYLPIKVIPSQAFRGLNEVIKIEISQSDSLEKIEANAFDNLLNLSEILIQNTKNLVHIEAGAFTNLPRLKYLSICNTGIHKLPDVTKIFSSEFNFILEICDNLHITTIPRNAFQGMNNESITLKLYGNGFEEIQSHAFNGTTLISLELKENARLEKMHNDAFRGATGPSILDISSTKLQALPTYGLESIQTLIATSSYSLKKLPSREKFTNLLDATLTYPSHCCAFRNLPTNEQNFSFSIFKNFSKQCESTARRPNNETLYSAIFAESELSGWDYDYGFCLPKTLQCAPEPDAFNPCEDIMGYNFLRVLIWLINILAITGNVTVLFVLLTSRYKLTVPRFLMCNLSFADFCMGLYLLLIASVDAQTKGQYYNHAIDWQTGSGCSAAGFFTVFASELSVYTLTVITLERWHTITYAIQLDQKLRLKHAIPVMLGGWLFSTLIAVLPLVGVSNYMKVSICLPMDVESTLSQVYILTILILNVMAFIIICACYIKIYFAVQNPELMATNKDTKIAKKMAVLIFTDFTCMAPISFFAISAAFKVPLITVTNSKVLLVLFYPVNSCANPFLYAIFTKAFQRDFFLLLSKFGCCKYRAELYRRKDFSAYISNCKNGFTGSNKPSRSTFKLTTLQCQYSAVLDKTCYKEC.

The signal sequence occupies residues 1-26 (MGRPSLALRLLLALLLLPPPAPLLWA). Over 27-365 (LRPAPCPEPC…EDIMGYNFLR (339 aa)) the chain is Extracellular. Residue N101 is glycosylated (N-linked (GlcNAc...) asparagine). LRR repeat units lie at residues 124–149 (LPRLKYLSICNTGIHKLPDVTKIFSS), 151–173 (FNFILEICDNLHITTIPRNAFQG), 174–198 (MNNESITLKLYGNGFEEIQSHAFNG), 200–222 (TLISLELKENARLEKMHNDAFRG), 223–246 (ATGPSILDISSTKLQALPTYGLES), and 250–271 (LIATSSYSLKKLPSREKFTNLL). N176 and N197 each carry an N-linked (GlcNAc...) asparagine glycan. Residues N293, N301, and N315 are each glycosylated (N-linked (GlcNAc...) asparagine). Position 333 is a sulfotyrosine (Y333). The helical transmembrane segment at 366–387 (VLIWLINILAITGNVTVLFVLL) threads the bilayer. The Cytoplasmic portion of the chain corresponds to 388 to 397 (TSRYKLTVPR). The helical transmembrane segment at 398–418 (FLMCNLSFADFCMGLYLLLIA) threads the bilayer. Over 419-441 (SVDAQTKGQYYNHAIDWQTGSGC) the chain is Extracellular. Cysteines 441 and 516 form a disulfide. The helical transmembrane segment at 442–464 (SAAGFFTVFASELSVYTLTVITL) threads the bilayer. Topologically, residues 465-484 (ERWHTITYAIQLDQKLRLKH) are cytoplasmic. A helical transmembrane segment spans residues 485 to 507 (AIPVMLGGWLFSTLIAVLPLVGV). Residues 508–527 (SNYMKVSICLPMDVESTLSQ) lie on the Extracellular side of the membrane. A helical membrane pass occupies residues 528-551 (VYILTILILNVMAFIIICACYIKI). The Cytoplasmic portion of the chain corresponds to 552–572 (YFAVQNPELMATNKDTKIAKK). Residues 573–596 (MAVLIFTDFTCMAPISFFAISAAF) form a helical membrane-spanning segment. At 597–607 (KVPLITVTNSK) the chain is on the extracellular side. The chain crosses the membrane as a helical span at residues 608–629 (VLLVLFYPVNSCANPFLYAIFT). Topologically, residues 630 to 701 (KAFQRDFFLL…VLDKTCYKEC (72 aa)) are cytoplasmic. 2 S-palmitoyl cysteine lipidation sites follow: C645 and C646.

This sequence belongs to the G-protein coupled receptor 1 family. FSH/LSH/TSH subfamily. Post-translationally, sulfated.

It localises to the cell membrane. Receptor for lutropin-choriogonadotropic hormone. The activity of this receptor is mediated by G proteins which activate adenylate cyclase. In Bos taurus (Bovine), this protein is Lutropin-choriogonadotropic hormone receptor (LHCGR).